The following is a 520-amino-acid chain: Protein EARLY FLOWERING 5 (520 aa).

Short sequence motifs (nuclear localization signal) lie at residues 16–23 (YRKQIRKR), 52–59 (IRKLDMSK), and 71–78 (KKRQLEDT). The segment at 83 to 410 (VKKRKEYDEK…PPSSFQDGQA (328 aa)) is disordered. 2 stretches are compositionally biased toward basic and acidic residues: residues 87-97 (KEYDEKKKEQG) and 114-126 (LTGEEDLKPEDSV). The segment covering 148 to 168 (SSIGLAISSDGASSSSAALSS) has biased composition (low complexity). Pro residues-rich tracts occupy residues 198–207 (PLPPLPPLPP), 216–227 (SPFPPPPPGPPP), and 235–253 (PPLPPPPQLPQSSQPPPPG). Composition is skewed to polar residues over residues 267–281 (SDFTFDNRMNANITS), 300–312 (AESNASSFQNANL), and 326–343 (QQHQSTFAGAAASLTNFQ). 2 stretches are compositionally biased toward pro residues: residues 346 to 369 (VHPPPGMLRFPPPPPPLDMHPPHP) and 378 to 403 (PRPPYGPPPGPPPMMRPPLPPGPPPS).

In terms of tissue distribution, in seedlings, mostly expressed in the shoot apical meristem (SAM) and root tip.

The protein localises to the nucleus. In terms of biological role, involved in the regulation of flowering time in both long and short days. This chain is Protein EARLY FLOWERING 5, found in Arabidopsis thaliana (Mouse-ear cress).